A 32-amino-acid polypeptide reads, in one-letter code: Peptide tarsal-less AA (32 aa).

Positions 1–32 are disordered; sequence MLDPTGTYRRPRDTQDSRQKRRQDCLDPTGQY. Repeat unit 1 spans residues 2 to 8; the sequence is LDPTGTY. The segment at 2 to 32 is 2 X 7 AA repeats of L-D-P-T-G-[TQ]-Y; sequence LDPTGTYRRPRDTQDSRQKRRQDCLDPTGQY. Basic and acidic residues predominate over residues 10-25; that stretch reads RPRDTQDSRQKRRQDC. The stretch at 26 to 32 is repeat 2; that stretch reads LDPTGQY.

Its subcellular location is the cytoplasm. It is found in the nucleus. Functionally, one of four peptides (tal-1A, tal-2A, tal-3A and tal-AA) produced from a polycistronic gene that function redundantly in several developmental processes. Required in early stages of leg development for the intercalation of the tarsal segments during the mid-third instar stage and later for tarsal joint formation. Promotes the post-translational modification of ovo isoform B (svb) into its active form which in turn initiates trichome development and promotes tarsal joint development. This is likely due to recruitment of the E3 ubiquitin-protein ligase Ubr3 to svb for ubiquitination of its N-terminus, converting svb into a transcriptional activator. Also enhances interaction of Ubr3 with Diap1. Required for correct wing and leg formation through its regulation of several genes including those in the Notch signaling pathway. Essential for denticle formation and may have a role in the developmental timing of trichome differentiation. Essential for the development of taenidial folds in the trachea. This is Peptide tarsal-less AA from Drosophila melanogaster (Fruit fly).